Here is a 286-residue protein sequence, read N- to C-terminus: D-tagatose-1,6-bisphosphate aldolase subunit KbaY (286 aa).

The active-site Proton donor is the aspartate 82. Zn(2+) contacts are provided by histidine 83 and histidine 180. Glycine 181 is a binding site for dihydroxyacetone phosphate. Position 208 (histidine 208) interacts with Zn(2+). Dihydroxyacetone phosphate-binding positions include 209–211 and 230–233; these read GAS and NVAT.

The protein belongs to the class II fructose-bisphosphate aldolase family. TagBP aldolase KbaY subfamily. Homotetramer. Forms a complex with KbaZ. Zn(2+) serves as cofactor.

The catalysed reaction is D-tagatofuranose 1,6-bisphosphate = D-glyceraldehyde 3-phosphate + dihydroxyacetone phosphate. It functions in the pathway carbohydrate metabolism; D-tagatose 6-phosphate degradation; D-glyceraldehyde 3-phosphate and glycerone phosphate from D-tagatose 6-phosphate: step 2/2. Functionally, catalytic subunit of the tagatose-1,6-bisphosphate aldolase KbaYZ, which catalyzes the reversible aldol condensation of dihydroxyacetone phosphate (DHAP or glycerone-phosphate) with glyceraldehyde 3-phosphate (G3P) to produce tagatose 1,6-bisphosphate (TBP). Requires KbaZ subunit for full activity and stability. The polypeptide is D-tagatose-1,6-bisphosphate aldolase subunit KbaY (Escherichia coli O7:K1 (strain IAI39 / ExPEC)).